The sequence spans 27 residues: Cupiennin-4b (27 aa).

Position 27 is a glutamine amide (Gln27).

As to expression, expressed by the venom gland.

The protein resides in the secreted. The chain is Cupiennin-4b from Cupiennius salei (American wandering spider).